The chain runs to 874 residues: Valine--tRNA ligase (874 aa).

Residues 42–52 (PNITGRIHIGH) carry the 'HIGH' region motif. A 'KMSKS' region motif is present at residues 522-526 (KMSKS). Position 525 (Lys-525) interacts with ATP. Residues 806–874 (DYIDIDTEKQ…KLQALLKEIS (69 aa)) adopt a coiled-coil conformation.

Belongs to the class-I aminoacyl-tRNA synthetase family. ValS type 1 subfamily. Monomer.

Its subcellular location is the cytoplasm. The catalysed reaction is tRNA(Val) + L-valine + ATP = L-valyl-tRNA(Val) + AMP + diphosphate. Its function is as follows. Catalyzes the attachment of valine to tRNA(Val). As ValRS can inadvertently accommodate and process structurally similar amino acids such as threonine, to avoid such errors, it has a 'posttransfer' editing activity that hydrolyzes mischarged Thr-tRNA(Val) in a tRNA-dependent manner. The protein is Valine--tRNA ligase of Petrotoga mobilis (strain DSM 10674 / SJ95).